Here is a 205-residue protein sequence, read N- to C-terminus: Large ribosomal subunit protein uL4 (205 aa).

The protein belongs to the universal ribosomal protein uL4 family. As to quaternary structure, part of the 50S ribosomal subunit.

Functionally, one of the primary rRNA binding proteins, this protein initially binds near the 5'-end of the 23S rRNA. It is important during the early stages of 50S assembly. It makes multiple contacts with different domains of the 23S rRNA in the assembled 50S subunit and ribosome. Its function is as follows. Forms part of the polypeptide exit tunnel. The protein is Large ribosomal subunit protein uL4 of Dinoroseobacter shibae (strain DSM 16493 / NCIMB 14021 / DFL 12).